The chain runs to 739 residues: Nucleoprotein (739 aa).

Residues 334–363 (VNVGEQYQQLREAATEAEKQLQQYAESREL) are a coiled coil. The disordered stretch occupies residues 415 to 646 (PKTSGHYDDD…QDSDNTQPEH (232 aa)). Composition is skewed to low complexity over residues 449–458 (SQDTTIPDVV) and 504–514 (KGGQQKNSQKG). Over residues 520–530 (RQTQSRPTQNV) the composition is skewed to polar residues. Residues 567–579 (EEADPLDDADDET) are compositionally biased toward acidic residues. The segment covering 611–638 (YRDHSEKRELPQDEQQDQDHTQEARNQD) has biased composition (basic and acidic residues).

The protein belongs to the filoviruses nucleoprotein family. In terms of assembly, homooligomer. Homomultimerizes to form the nucleocapsid. Binds to viral genomic RNA. Interacts with VP35 and VP30 to form the nucleocapsid. Interacts with host PPP2R5C; this interaction leads to VP30 dephosphorylation and viral transcription. Interacts with VP24; this interaction facilitates nucleocapsid assembly and genome packaging. Interacts with matrix protein VP40; this interaction allows recruitment of the nucleocapsid into progeny virions. Interacts with host STAU1. Interacts with host NXF1 (via RNA-binding domain); this interaction recruits NXF1 to the inclusion bodies were viral replication takes place, probably to export viral mRNA-NXF1 complexes from these sites. Interacts with host CCDC92; this interaction sequesters NP in the host cytoplasm. Interacts with host TRIM14. In terms of processing, phosphorylated and O-glycosylated by host. Acetylated by host EP300 in vitro.

It localises to the virion. Its subcellular location is the host cytoplasm. Its function is as follows. Oligomerizes into helical capsid to encapsidate the viral genome, protecting it from nucleases and the cellular innate immune response. VP35 binds to and stabilizes monomeric NP, keeping it soluble. Upon virus replication, NP is recruited to bind cooperatively viral genomic RNA and VP35 is released. The encapsidated genomic RNA is termed the nucleocapsid and serves as template for transcription and replication. The nucleocapsid is helical with a pitch of 10.81 NP per turn and a diameter of about 22nm. Each NP binds to six nucleotides of viral genomic RNA, three being exposed to the solvant and three hidden into the nucleocapsid. Also recruits host PPP2R5C phosphatase to dephosphorylate VP30 and thereby promote viral transcription. Upon virion assembly and budding, NP binds to VP24 and possibly host STAU1. This chain is Nucleoprotein (NP), found in Epomops franqueti (Franquet's epauletted fruit bat).